We begin with the raw amino-acid sequence, 465 residues long: Gamma-aminobutyric acid receptor subunit alpha-6 (465 aa).

The first 19 residues, 1–19 (MALLIAWVCVAVSIEKALG), serve as a signal peptide directing secretion. At 20-243 (GQGDGGDLYS…FHLQRKMGYF (224 aa)) the chain is on the extracellular side. N31 is a glycosylation site (N-linked (GlcNAc...) asparagine). R84 serves as a coordination point for 4-aminobutanoate. N-linked (GlcNAc...) asparagine glycosylation is found at N128 and N141. T147 contributes to the 4-aminobutanoate binding site. Residues C156 and C170 are joined by a disulfide bond. A helical membrane pass occupies residues 244-264 (MIQIYTPCIMTVILSQVSFWI). The Cytoplasmic portion of the chain corresponds to 265-270 (NKESVP). A helical transmembrane segment spans residues 271-290 (ARTVFGITTVLTMTTLSISA). The Extracellular segment spans residues 291–304 (RHSLPKVSYATAMD). A helical transmembrane segment spans residues 305-325 (WFIAVCFAFVFSALIEFAAVN). Residues 326 to 424 (YFTNLQTQRA…GTSKIDQYSR (99 aa)) are Cytoplasmic-facing. The segment at 392–415 (NSASQCQPVSAPPPAPPAPPPVGG) is disordered. Pro residues predominate over residues 401–413 (SAPPPAPPAPPPV). Residues 425-445 (ILFPVAFAGFNLVYWVVYLSK) traverse the membrane as a helical segment. Over 446-465 (DTMEFFEPTAMHLRNDHQSN) the chain is Extracellular.

It belongs to the ligand-gated ion channel (TC 1.A.9) family. Gamma-aminobutyric acid receptor (TC 1.A.9.5) subfamily. GABRA6 sub-subfamily. As to quaternary structure, heteropentamer, formed by a combination of alpha (GABRA1-6), beta (GABRB1-3), gamma (GABRG1-3), delta (GABRD), epsilon (GABRE), rho (GABRR1-3), pi (GABRP) and theta (GABRQ) chains, each subunit exhibiting distinct physiological and pharmacological properties. As to expression, expressed in brain, in cerebellar granule cells.

The protein resides in the postsynaptic cell membrane. Its subcellular location is the cell membrane. The enzyme catalyses chloride(in) = chloride(out). Alpha subunit of the heteropentameric ligand-gated chloride channel gated by gamma-aminobutyric acid (GABA), a major inhibitory neurotransmitter in the brain. GABA-gated chloride channels, also named GABA(A) receptors (GABAAR), consist of five subunits arranged around a central pore and contain GABA active binding site(s) located at the alpha and beta subunit interface(s). When activated by GABA, GABAARs selectively allow the flow of chloride anions across the cell membrane down their electrochemical gradient. This is Gamma-aminobutyric acid receptor subunit alpha-6 (GABRA6) from Gallus gallus (Chicken).